Here is a 243-residue protein sequence, read N- to C-terminus: Amphiregulin (243 aa).

The N-terminal stretch at 1–24 (MRTPSLSLALSVLSLLVLGSGHYA) is a signal peptide. A propeptide spanning residues 25-96 (AGLELNGTSS…IVDDSVRVEQ (72 aa)) is cleaved from the precursor. Asn-30 carries an N-linked (GlcNAc...) asparagine glycan. A compositionally biased stretch (polar residues) spans 55 to 67 (STISEMPSGSELS). Disordered stretches follow at residues 55–75 (STIS…DYSE) and 98–135 (IKPK…KKKN). Residues 98-113 (IKPKENKTEGEKSSEK) are compositionally biased toward basic and acidic residues. A glycan (N-linked (GlcNAc...) asparagine) is linked at Asn-103. The segment covering 114-135 (PKRKKKGGKGGKGRRNRKKKKN) has biased composition (basic residues). Residues 133–173 (KKNPCAAKFQNFCIHGECRYIENLEVVTCHCHQDYFGERCG) enclose the EGF-like domain. 3 disulfides stabilise this stretch: Cys-137–Cys-150, Cys-145–Cys-161, and Cys-163–Cys-172. Residues 190–213 (IALAAIIVFVSAVSVAAIGIITAV) form a helical membrane-spanning segment. An N-linked (GlcNAc...) asparagine glycan is attached at Asn-236.

This sequence belongs to the amphiregulin family. As to quaternary structure, the immature precursor interacts with CNIH.

The protein localises to the membrane. Ligand of the EGF receptor/EGFR. Autocrine growth factor as well as a mitogen for a broad range of target cells including astrocytes, Schwann cells and fibroblasts. This Rattus norvegicus (Rat) protein is Amphiregulin (Areg).